We begin with the raw amino-acid sequence, 658 residues long: Heat shock protein homolog SSE1 (658 aa).

Residues K614–A627 show a composition bias toward basic and acidic residues. A disordered region spans residues K614–E658. Residues E642–E658 show a composition bias toward acidic residues.

This sequence belongs to the heat shock protein 70 family.

It is found in the cytoplasm. Functionally, required for normal growth at various temperatures. This chain is Heat shock protein homolog SSE1 (SSE1), found in Encephalitozoon cuniculi (strain GB-M1) (Microsporidian parasite).